The chain runs to 232 residues: Large ribosomal subunit protein uL1 (232 aa).

This sequence belongs to the universal ribosomal protein uL1 family. In terms of assembly, part of the 50S ribosomal subunit.

In terms of biological role, binds directly to 23S rRNA. The L1 stalk is quite mobile in the ribosome, and is involved in E site tRNA release. Protein L1 is also a translational repressor protein, it controls the translation of the L11 operon by binding to its mRNA. This is Large ribosomal subunit protein uL1 from Cereibacter sphaeroides (strain ATCC 17029 / ATH 2.4.9) (Rhodobacter sphaeroides).